Reading from the N-terminus, the 375-residue chain is MLFYFELVVILLCTKLAGDISVRLGQPSVLGKLIVGIIIGPAVLGIINSSELIDELSEIGVLLLMFMAGLETDLEELNRNLKSSFAVAAGGIIFPFIGGYVTGLLFGLIQSHAIFLGLLLCATSVSITVQTLRDLGKMNTRESTTILGAAVFDDVIVVILLAFVMSFLGTQDVNITLVIVKKIIFFVSIVFIAWKVVPWIMKMLVPLRVTEALISAALIICFSFSYYSEMMGIAGIIGAFAAGIAISQTEYKHEVEHKIEPIAYAIFVPVFFVSIGMEITFQGIGSQLWFIIIMTLIAIFTKLIGSGLGARLTGFNLQSSISIGAGMVSRGEVALIIAANGLTANLLAKENFTAIVIVVILTTIITPPLLKKYFV.

10 helical membrane passes run 27 to 47 (PSVL…LGII), 89 to 109 (AGGI…FGLI), 112 to 132 (HAIF…VQTL), 145 to 165 (TILG…AFVM), 183 to 203 (IIFF…IMKM), 204 to 224 (LVPL…CFSF), 226 to 246 (YYSE…GIAI), 261 to 281 (PIAY…EITF), 288 to 308 (LWFI…GSGL), and 350 to 370 (ENFT…PPLL).

This sequence belongs to the monovalent cation:proton antiporter 2 (CPA2) transporter (TC 2.A.37) family.

The protein resides in the membrane. Functionally, contributes to the success of spore outgrowth from the germinated state during alkaline or Na(+) stress. Does not have a significant role in germination. The polypeptide is Probable Na(+)/H(+) antiporter GerT (gerT) (Bacillus cereus).